A 383-amino-acid polypeptide reads, in one-letter code: Acetylornithine deacetylase (383 aa).

Position 80 (histidine 80) interacts with Zn(2+). Aspartate 82 is an active-site residue. Residue aspartate 112 participates in Zn(2+) binding. Residue glutamate 144 is part of the active site. Zn(2+)-binding residues include glutamate 145, glutamate 169, and histidine 355.

Belongs to the peptidase M20A family. ArgE subfamily. Homodimer. Requires Zn(2+) as cofactor. The cofactor is Co(2+). It depends on glutathione as a cofactor.

The protein localises to the cytoplasm. The catalysed reaction is N(2)-acetyl-L-ornithine + H2O = L-ornithine + acetate. It functions in the pathway amino-acid biosynthesis; L-arginine biosynthesis; L-ornithine from N(2)-acetyl-L-ornithine (linear): step 1/1. In terms of biological role, catalyzes the hydrolysis of the amide bond of N(2)-acetylated L-amino acids. Cleaves the acetyl group from N-acetyl-L-ornithine to form L-ornithine, an intermediate in L-arginine biosynthesis pathway, and a branchpoint in the synthesis of polyamines. In Salmonella typhi, this protein is Acetylornithine deacetylase.